We begin with the raw amino-acid sequence, 297 residues long: Undecaprenyl-diphosphatase (297 aa).

The next 7 helical transmembrane spans lie at Pro58–Phe78, Ala103–Ile123, Leu138–Leu158, Leu168–Val188, Ala208–Leu228, Val243–Leu263, and Phe274–Leu294.

It belongs to the UppP family.

The protein resides in the cell inner membrane. The enzyme catalyses di-trans,octa-cis-undecaprenyl diphosphate + H2O = di-trans,octa-cis-undecaprenyl phosphate + phosphate + H(+). In terms of biological role, catalyzes the dephosphorylation of undecaprenyl diphosphate (UPP). Confers resistance to bacitracin. This is Undecaprenyl-diphosphatase from Synechococcus sp. (strain ATCC 27144 / PCC 6301 / SAUG 1402/1) (Anacystis nidulans).